The primary structure comprises 56 residues: Genome polyprotein (56 aa).

Residues 1 to 30 are disordered; it reads ETMLDRIASGDLESSVDDPRSAEDKRFESH. Residues 17-30 are compositionally biased toward basic and acidic residues; the sequence is DDPRSAEDKRFESH.

This sequence belongs to the picornaviridae polyprotein family. As to quaternary structure, homopentamer. Homooligomer. In terms of assembly, interacts with capsid protein VP2. Interacts with capsid protein VP3. In terms of processing, specific enzymatic cleavages by viral protease in vivo yield a variety of precursors and mature proteins. Polyprotein processing intermediates are produced, such as P1-2A which is a functional precursor of the structural proteins, VP0 which is a VP4-VP2 precursor, VP1-2A precursor, 3ABC precursor which is a stable and catalytically active precursor of 3A, 3B and 3C proteins, 3AB and 3CD precursors. The assembly signal 2A is removed from VP1-2A by a host protease, possibly host Cathepsin L. This cleavage occurs over a region of 3 amino-acids probably generating VP1 proteins with heterogeneous C-termini. Post-translationally, the assembly signal 2A is removed from VP1-2A by a host protease, possibly host Cathepsin L in naked virions. This cleavage does not occur in enveloped virions. This cleavage occurs over a region of 3 amino-acids probably generating VP1 proteins with heterogeneous C-termini.

It is found in the virion. The protein localises to the host endosome. It localises to the host multivesicular body. Functionally, capsid proteins VP1, VP2, and VP3 form a closed capsid enclosing the viral positive strand RNA genome. All these proteins contain a beta-sheet structure called beta-barrel jelly roll. Together they form an icosahedral capsid (T=3) composed of 60 copies of each VP1, VP2, and VP3, with a diameter of approximately 300 Angstroms. VP1 is situated at the 12 fivefold axes, whereas VP2 and VP3 are located at the quasi-sixfold axes. The naked capsid interacts with the host receptor HAVCR1 to provide virion attachment to and probably entry into the target cell. Precursor component of immature procapsids that corresponds to an extended form of the structural protein VP1. After maturation, possibly by the host Cathepsin L, the assembly signal 2A is cleaved to give rise to the mature VP1 protein. The polypeptide is Genome polyprotein (Callithrix (Owl-faced monkey)).